Reading from the N-terminus, the 442-residue chain is Elongation factor 1-alpha (442 aa).

Positions 5–228 (KTHINIVVIG…DSVTPPERPV (224 aa)) constitute a tr-type G domain. The interval 14-21 (GHVDSGKS) is G1. 14 to 21 (GHVDSGKS) serves as a coordination point for GTP. The segment at 70–74 (GITID) is G2. The interval 91–94 (DAPG) is G3. Residues 91-95 (DAPGH) and 153-156 (NKMD) each bind GTP. Residues 153 to 156 (NKMD) are G4. Residues 192–194 (SGF) form a G5 region.

The protein belongs to the TRAFAC class translation factor GTPase superfamily. Classic translation factor GTPase family. EF-Tu/EF-1A subfamily.

It localises to the cytoplasm. In terms of biological role, this protein promotes the GTP-dependent binding of aminoacyl-tRNA to the A-site of ribosomes during protein biosynthesis. The chain is Elongation factor 1-alpha from Entamoeba histolytica (strain ATCC 30459 / HM-1:IMSS / ABRM).